Consider the following 258-residue polypeptide: Snake venom serine protease 1 (258 aa).

A signal peptide spans 1–18; sequence MVLIRVLANLLILQLSYA. The propeptide occupies 19 to 24; the sequence is QKSSEL. The Peptidase S1 domain occupies 25–249; it reads VVGGDECNIN…YNDWIKSIIA (225 aa). Cystine bridges form between Cys31–Cys163, Cys50–Cys66, Cys98–Cys256, Cys142–Cys210, Cys174–Cys189, and Cys200–Cys225. The N-linked (GlcNAc...) asparagine glycan is linked to Asn44. Residues His65 and Asp110 each act as charge relay system in the active site. Catalysis depends on Ser204, which acts as the Charge relay system.

It belongs to the peptidase S1 family. Snake venom subfamily. In terms of assembly, monomer. Expressed by the venom gland.

It localises to the secreted. Functionally, snake venom serine protease that may act in the hemostasis system of the prey. This Craspedocephalus gramineus (Bamboo pit viper) protein is Snake venom serine protease 1 (TLG1).